The sequence spans 96 residues: (4S)-4-hydroxy-5-phosphonooxypentane-2,3-dione isomerase (96 aa).

The ABM domain occupies 2–91; the sequence is HVTLVEINVH…MTGPRTKKVF (90 aa).

Belongs to the LsrG family. As to quaternary structure, homodimer.

It localises to the cytoplasm. It carries out the reaction (2S)-2-hydroxy-3,4-dioxopentyl phosphate = 3-hydroxy-2,4-dioxopentyl phosphate. Its function is as follows. Involved in the degradation of phospho-AI-2, thereby terminating induction of the lsr operon and closing the AI-2 signaling cycle. Catalyzes the conversion of (4S)-4-hydroxy-5-phosphonooxypentane-2,3-dione (P-DPD) to 3-hydroxy-5-phosphonooxypentane-2,4-dione (P-HPD). In Salmonella choleraesuis (strain SC-B67), this protein is (4S)-4-hydroxy-5-phosphonooxypentane-2,3-dione isomerase.